A 284-amino-acid chain; its full sequence is MPDYTWFEGIPFHAFGISKETLQNVCNKFVVKDEDLILLAYPKSGTNWLIEIVCLIQTKGDPKWIQSVTIWDRSPWIETDLGYDMLIKKKGPRLITSHLPMHLFSKSLFSSKAKVIYLVRNPRDVLVSGYYFWGNSTLAKKPDSLGTYVEWFLKGNVLYGSWFEHIRAWLSMREWDNFLLLYYEDMKKDTMGTIKKICDFLGKKLEPDELDLVLKYSSFQVMKENDMSNYSLLMKKSIFTGIGLMRKGTVGDWKNHFTVSQAEAFDKVFQEKMAGFPPGMFPWE.

3'-phosphoadenylyl sulfate contacts are provided by Lys-43, Ser-44, Gly-45, Thr-46, Asn-47, and Trp-48. The active-site Proton acceptor is the His-98. Arg-120, Ser-128, Tyr-183, Ser-217, Met-222, Arg-246, Lys-247, and Gly-248 together coordinate 3'-phosphoadenylyl sulfate.

The protein belongs to the sulfotransferase 1 family. Homodimer.

The protein localises to the cytoplasm. It carries out the reaction an alcohol + 3'-phosphoadenylyl sulfate = an alkyl sulfate + adenosine 3',5'-bisphosphate + H(+). It catalyses the reaction taurolithocholate + 3'-phosphoadenylyl sulfate = taurolithocholate 3-sulfate + adenosine 3',5'-bisphosphate + H(+). The catalysed reaction is lithocholate + 3'-phosphoadenylyl sulfate = lithocholate sulfate + adenosine 3',5'-bisphosphate + H(+). The enzyme catalyses (24S)-hydroxycholesterol + 3'-phosphoadenylyl sulfate = (24S)-hydroxycholesterol 24-sulfate + adenosine 3',5'-bisphosphate + H(+). It carries out the reaction (24S)-hydroxycholesterol + 3'-phosphoadenylyl sulfate = (24S)-hydroxycholesterol 3-sulfate + adenosine 3',5'-bisphosphate + H(+). It catalyses the reaction (24S)-hydroxycholesterol 24-sulfate + 3'-phosphoadenylyl sulfate = (24S)-hydroxycholesterol 3,24-disulfate + adenosine 3',5'-bisphosphate + H(+). The catalysed reaction is 3beta-hydroxyandrost-5-en-17-one + 3'-phosphoadenylyl sulfate = dehydroepiandrosterone 3-sulfate + adenosine 3',5'-bisphosphate + H(+). The enzyme catalyses pregnenolone + 3'-phosphoadenylyl sulfate = pregnenolone sulfate + adenosine 3',5'-bisphosphate + H(+). It carries out the reaction androsterone + 3'-phosphoadenylyl sulfate = androsterone 3alpha-sulfate + adenosine 3',5'-bisphosphate + H(+). Functionally, sulfotransferase that utilizes 3'-phospho-5'-adenylyl sulfate (PAPS) as sulfonate donor to catalyze the sulfonation of steroids and bile acids in the liver and adrenal glands. Mediates the sulfation of a wide range of steroids and sterols, including pregnenolone, androsterone, DHEA, bile acids, cholesterol and as well many xenobiotics that contain alcohol and phenol functional groups. Sulfonation increases the water solubility of most compounds, and therefore their renal excretion, but it can also result in bioactivation to form active metabolites. Plays an important role in maintening steroid and lipid homeostasis. Plays a key role in bile acid metabolism. In addition, catalyzes the metabolic activation of potent carcinogenic polycyclic arylmethanols. In Rattus norvegicus (Rat), this protein is Sulfotransferase 2A1 (Sult2a1).